Consider the following 186-residue polypeptide: ADP-ribosylation factor-like protein 8B-A (186 aa).

The note=Mediates targeting to membranes intramembrane region spans 1-19; it reads MLALINRLLDWFKSLFWKE. GTP-binding positions include 29-35, 71-75, and 130-133; these read QYSGKTT, DIGGQ, and NKRD.

The protein belongs to the small GTPase superfamily. Arf family.

The protein localises to the late endosome membrane. Its subcellular location is the lysosome membrane. It is found in the cytoplasm. It localises to the cytoskeleton. The protein resides in the spindle. The protein localises to the early endosome membrane. Functionally, small GTPase which cycles between active GTP-bound and inactive GDP-bound states. In its active state, binds to a variety of effector proteins playing a key role in the regulation of lysosomal positioning which is important for nutrient sensing, natural killer cell-mediated cytotoxicity and antigen presentation. Along with its effectors, orchestrates lysosomal transport and fusion. The protein is ADP-ribosylation factor-like protein 8B-A (arl8ba) of Danio rerio (Zebrafish).